Here is a 109-residue protein sequence, read N- to C-terminus: Cell division suppressor protein YneA (109 aa).

A LysM domain is found at 39 to 90 (SEVNVSEGDSLWALADQYAGKSDMAKADFVSWVEKENNLADGHVEAGESVVI).

The protein belongs to the YneA family.

It localises to the cytoplasm. Its function is as follows. Inhibits cell division during the SOS response. Affects a later stage of the cell division protein assembly, after the assembly of the Z ring, by probably suppressing recruitment of FtsL and/or DivIC to the division machinery. The polypeptide is Cell division suppressor protein YneA (Listeria monocytogenes serotype 4b (strain F2365)).